The following is a 125-amino-acid chain: Small ribosomal subunit protein uS12 (125 aa).

3-methylthioaspartic acid is present on aspartate 89.

The protein belongs to the universal ribosomal protein uS12 family. In terms of assembly, part of the 30S ribosomal subunit. Contacts proteins S8 and S17. May interact with IF1 in the 30S initiation complex.

With S4 and S5 plays an important role in translational accuracy. Functionally, interacts with and stabilizes bases of the 16S rRNA that are involved in tRNA selection in the A site and with the mRNA backbone. Located at the interface of the 30S and 50S subunits, it traverses the body of the 30S subunit contacting proteins on the other side and probably holding the rRNA structure together. The combined cluster of proteins S8, S12 and S17 appears to hold together the shoulder and platform of the 30S subunit. The polypeptide is Small ribosomal subunit protein uS12 (Clostridium kluyveri (strain ATCC 8527 / DSM 555 / NBRC 12016 / NCIMB 10680 / K1)).